A 257-amino-acid polypeptide reads, in one-letter code: Probable ABC transporter arginine-binding protein ArtJ (257 aa).

An N-terminal signal peptide occupies residues 1–23 (MCIKRKKTWIAFLAVVCSFCLTG). L-arginine-binding residues include asparagine 41, glutamate 48, glycine 100, serine 102, arginine 107, and tyrosine 151.

Belongs to the bacterial solute-binding protein 3 family.

Its subcellular location is the secreted. It localises to the cell surface. In terms of biological role, probably part of an ABC transporter complex involved in arginine transport. Binds arginine. Interacts with host epithelial cells, suggesting a role in host-cell adhesion during infection. This is Probable ABC transporter arginine-binding protein ArtJ from Chlamydia trachomatis serovar D (strain ATCC VR-885 / DSM 19411 / UW-3/Cx).